The primary structure comprises 912 residues: Accessory gland protein Acp36DE (912 aa).

The N-terminal stretch at 1 to 23 (MWTLTCQQFIALILLGTLVPSES) is a signal peptide. Composition is skewed to low complexity over residues 193–220 (QSQSQTQSQSASQSESNASSQFQAQEQS), 230–255 (SESQSQSESQSQSESQKQSQSQSQRQ), 271–324 (KSNE…GLQQ), and 521–544 (QSQLQESKSNSLSQSQSQSQEQLQ). Disordered regions lie at residues 193-255 (QSQS…SQRQ), 271-349 (KSNE…QKQL), 518-544 (TQTQSQLQESKSNSLSQSQSQSQEQLQ), 638-671 (PSEGKPAPGNQGPSIEPKLVPQPGSLDKLPSGGG), and 732-912 (GQQQ…NLSG). Composition is skewed to low complexity over residues 732–757 (GQQQKEQQAQESINKQQSSSAGSSSQ) and 765–785 (QSTGAQGSQQGLQAGSTGLQT). A compositionally biased stretch (basic and acidic residues) spans 803-818 (RLKEQEQLRIQTENDQ). Low complexity predominate over residues 821–845 (SSSSSHSNSQNSQSSSSQSSQASQS). Over residues 851 to 861 (EAGNRNTLLLD) the composition is skewed to polar residues. Low complexity predominate over residues 862–897 (QSSSKTQSESKSESSSQSSSHSSSQSTSNSSSNVQS). A compositionally biased stretch (polar residues) spans 898-912 (KLQGESQALLNNLSG).

Post-translationally, proteolytically cleaved by the seminal metalloprotease Semp1. Cleavage appears to take place in the mated female. In terms of tissue distribution, detected in the male accessory glands (at protein level). Produced in the accessory glands and secreted into seminal fluid.

It is found in the secreted. In terms of biological role, responsible for physiological and behavioral changes in mated female flies. Associates with sperm and localizes to specific regions of the female reproductive tract, including the sperm storage organs. It accelerates sperm accumulation into storage but does not mediate the entry of the first sperm into storage. Once sperm storage has initiated it seems to act as a guidance factor helping subsequent sperm move into storage, a corral concentrating sperm around the SSO entrances and/or a trigger for responses within the female that accelerate storage of sperm. The chain is Accessory gland protein Acp36DE (Acp36DE) from Drosophila melanogaster (Fruit fly).